The chain runs to 285 residues: Nucleotide-binding protein PFLU_0879 (285 aa).

8–15 lines the ATP pocket; it reads GRSGSGKS. Residue 60 to 63 coordinates GTP; it reads DARN.

It belongs to the RapZ-like family.

Displays ATPase and GTPase activities. This Pseudomonas fluorescens (strain SBW25) protein is Nucleotide-binding protein PFLU_0879.